The following is a 75-amino-acid chain: Small ribosomal subunit protein bS18 (75 aa).

This sequence belongs to the bacterial ribosomal protein bS18 family. As to quaternary structure, part of the 30S ribosomal subunit. Forms a tight heterodimer with protein bS6.

Its function is as follows. Binds as a heterodimer with protein bS6 to the central domain of the 16S rRNA, where it helps stabilize the platform of the 30S subunit. The chain is Small ribosomal subunit protein bS18 from Legionella pneumophila (strain Paris).